The chain runs to 590 residues: MMPGLKLYGALILCVLVLPFSRPSSQVLDCREVRSSFQFLYPGMKWTPETPVSGSDLQVCQPKGLTCCSRKMEERYLLIAKQNMESSLQATSAQLKGLIIQNAALFQEAFDMVLRLGRNSTLMVLREEFPGLGAGASGAVTQLFLDMSLYILGSDANVNDMVSTFFSRLFPLTYRRLLGNGAVAGISEECLRGAWKGSSAYGSFPKMMMTRLSRSLLATRVFLQALNLGIEVVNTTQHLRAGRDCGRSLLKLWYCPHCQSLLEARPCRPLCVSTMGACLGGTTEVQPHWRAYVDELGSLAAAMKGEQDIEAVVLRLHVIIRQALKQAVASKSKVSAQVSGMCVHAPPRVSRAVPVSAEHTSASTVNHNRPPMNFDPDETLFGRRREFISGLRGFSQFYSGLGEALCSKEPTSLNSSLCWNGQEMTDKFPGPGLKRVHPHGSESKQKTPEPVISQIIDKLKHINQLLRMVTLPEKRWRARQGGGGARRNPSGPGQTDEDEEGLESGDCDDEDECTGVSGLGPPPRRKRLRIFADLADNLAIDDLTLHELLLTPRLATDAHGGSSIPGAAHVPTAAFIFTITIIIFITLGLQ.

The first 25 residues, 1–25, serve as a signal peptide directing secretion; it reads MMPGLKLYGALILCVLVLPFSRPSS. Cystine bridges form between Cys30–Cys67, Cys60–Cys255, Cys68–Cys258, Cys190–Cys342, Cys245–Cys278, Cys267–Cys418, and Cys271–Cys406. N-linked (GlcNAc...) asparagine glycosylation is found at Asn119 and Asn234. An N-linked (GlcNAc...) asparagine glycan is attached at Asn414. Disordered stretches follow at residues 429–450 and 476–520; these read PGPGLKRVHPHGSESKQKTPEP and WRAR…SGLG. Residues 495 to 513 are compositionally biased toward acidic residues; sequence TDEDEEGLESGDCDDEDEC. 2 O-linked (Xyl...) (glycosaminoglycan) serine glycosylation sites follow: Ser504 and Ser517.

The protein belongs to the glypican family. Heterodimer; disulfide-linked. Cleavage by a furin-like convertase results in production of alpha and beta chains which form a disulfide-linked heterodimer. O-glycosylated; contains heparan sulfate and/or chondroitin sulfate. Post-translationally, cleaved intracellularly by a furin-like convertase to generate 2 subunits, alpha and beta, which remain associated through disulfide bonds and are associated with the cell surface via the GPI-anchor. This processing is essential for its role in inhibition of hedgehog signaling. A second proteolytic event may result in cleavage of the protein on the cell surface, separating it from the GPI-anchor and leading to its shedding from the cell surface. Maternally expressed and is almost ubiquitous during blastula and gastrula stages but becomes restricted to the prospective hindbrain by 24 hours post-fertilization.

Its subcellular location is the cell membrane. Functionally, cell surface proteoglycan. Negatively regulates the hedgehog signaling pathway. Positively regulates the canonical and non-canonical Wnt signaling pathways. Binds to CD81 which decreases the availability of free CD81 for binding to the transcriptional repressor HHEX, resulting in nuclear translocation of HHEX and transcriptional repression. Inhibits the dipeptidyl peptidase activity of DPP4. Plays a role in limb patterning and skeletal development. Modulates the effects of growth factors on renal branching morphogenesis. Required for coronary vascular development. Plays a role in regulating cell movements during gastrulation. The polypeptide is Glypican-3 (Danio rerio (Zebrafish)).